The sequence spans 406 residues: Argininosuccinate synthase (406 aa).

Residues 12–20 (AYSGGLDTS) and A39 contribute to the ATP site. Residues Y90 and S95 each contribute to the L-citrulline site. G120 lines the ATP pocket. T122, N126, and D127 together coordinate L-aspartate. N126 provides a ligand contact to L-citrulline. L-citrulline is bound by residues R130, S179, S188, E264, and Y276.

This sequence belongs to the argininosuccinate synthase family. Type 1 subfamily. As to quaternary structure, homotetramer.

It is found in the cytoplasm. It catalyses the reaction L-citrulline + L-aspartate + ATP = 2-(N(omega)-L-arginino)succinate + AMP + diphosphate + H(+). It participates in amino-acid biosynthesis; L-arginine biosynthesis; L-arginine from L-ornithine and carbamoyl phosphate: step 2/3. In Geobacter sp. (strain M21), this protein is Argininosuccinate synthase.